The primary structure comprises 436 residues: uncharacterized protein (436 aa).

Residues 1 to 18 (MMKRFVALSMAIFSLSFA) form the signal peptide.

This is an uncharacterized protein from Aquifex aeolicus (strain VF5).